A 123-amino-acid chain; its full sequence is WAP four-disulfide core domain protein 2 (123 aa).

The N-terminal stretch at 1 to 26 is a signal peptide; the sequence is MPACRLGLLVASLLLGLLLGLPPVTG. WAP domains lie at 28–69 and 72–122; these read GAEK…VTIC and PNEK…VTPV. Cystine bridges form between C35-C61, C44-C65, C48-C60, C54-C69, C79-C109, C92-C113, C96-C108, and C102-C118.

As to quaternary structure, homotrimer; disulfide-linked. Detected in the distal parts of the epididymis.

The protein resides in the secreted. Functionally, broad range protease inhibitor. The polypeptide is WAP four-disulfide core domain protein 2 (WFDC2) (Sus scrofa (Pig)).